The sequence spans 79 residues: Moronecidin (79 aa).

Residues 1 to 22 (MKCATLFLVLSMVVLMAEPGDA) form the signal peptide. At glycine 44 the chain carries Glycine amide. The interval 45–79 (GKAEQDQQDQQYQQEQQEQQAQQYQRFNRERAAFD) is disordered. Positions 47–79 (AEQDQQDQQYQQEQQEQQAQQYQRFNRERAAFD) are excised as a propeptide. Residues 52–69 (QDQQYQQEQQEQQAQQYQ) are compositionally biased toward low complexity.

As to expression, expressed in mast cells in gill, skin and gut, and in lining blood vessels in the viscera. Also in intestine, spleen, anterior kidney, and blood cells.

Its subcellular location is the secreted. Functionally, antimicrobial peptide with broad-spectrum activity against Gram-positive and Gram-negative bacteria as well as against a variety of fungi. Rapidly inactivates channel catfish herpesvirus (ED(50)=4 uM) and frog virus 3 (ED(50)=13 uM) over a wide temperature range. Seems to disrupt the membranes by adopting an alpha helical conformation and forming toroidal pores. Has hemolytic activity. This chain is Moronecidin, found in Morone saxatilis (Striped bass).